Here is a 903-residue protein sequence, read N- to C-terminus: Protein translocase subunit SecA (903 aa).

ATP-binding positions include Q89, 107 to 111 (GEGKT), and D502. Zn(2+) contacts are provided by C887, C889, C898, and H899.

The protein belongs to the SecA family. In terms of assembly, monomer and homodimer. Part of the essential Sec protein translocation apparatus which comprises SecA, SecYEG and auxiliary proteins SecDF-YajC and YidC. Zn(2+) serves as cofactor.

It is found in the cell inner membrane. The protein resides in the cytoplasm. It carries out the reaction ATP + H2O + cellular proteinSide 1 = ADP + phosphate + cellular proteinSide 2.. Part of the Sec protein translocase complex. Interacts with the SecYEG preprotein conducting channel. Has a central role in coupling the hydrolysis of ATP to the transfer of proteins into and across the cell membrane, serving both as a receptor for the preprotein-SecB complex and as an ATP-driven molecular motor driving the stepwise translocation of polypeptide chains across the membrane. This is Protein translocase subunit SecA from Jannaschia sp. (strain CCS1).